The primary structure comprises 267 residues: Meiosis-specific protein ISC10 (267 aa).

A compositionally biased stretch (basic and acidic residues) spans 1 to 13 (MDVDERLHQDENQ). Residues 1–26 (MDVDERLHQDENQTHPFSQKKSSSFL) form a disordered region. The span at 14–25 (THPFSQKKSSSF) shows a compositional bias: polar residues.

Functionally, indispensable for spore formation. The sequence is that of Meiosis-specific protein ISC10 (ISC10) from Saccharomyces cerevisiae (strain ATCC 204508 / S288c) (Baker's yeast).